The primary structure comprises 202 residues: Arenicin-2 (202 aa).

The first 25 residues, 1–25 (MTSTQSVAVYATLILAIFCFNDIHC), serve as a signal peptide directing secretion. The propeptide occupies 26-181 (DPIAEARAAA…SGDNNEPEKR (156 aa)). Positions 73 to 168 (GDGVEGSVMV…ACQGKSVYWL (96 aa)) constitute a BRICHOS domain. Cystine bridges form between C100–C160 and C184–C201.

In terms of biological role, has antimicrobial activity against the Gram-negative bacteria E.coli and P.mirabilis, the Gram-positive bacterium L.monocytogenes and the yeast C.albicans. This chain is Arenicin-2, found in Arenicola marina (Lugworm).